We begin with the raw amino-acid sequence, 82 residues long: Probable 26S proteasome complex subunit dss-1 (82 aa).

The disordered stretch occupies residues 56-82; the sequence is NWDDETHESEFSKQLKEELRKSGHQVA. Residues 63 to 76 show a composition bias toward basic and acidic residues; the sequence is ESEFSKQLKEELRK.

This sequence belongs to the DSS1/SEM1 family. In terms of assembly, part of the 26S proteasome. As to expression, expressed in intestinal epithelium and head neurons.

Its subcellular location is the nucleus. It is found in the cytoplasm. Its function is as follows. Subunit of the 26S proteasome which plays a role in ubiquitin-dependent proteolysis. Has an essential role in oogenesis and larval growth. Required for intestinal function and default lifespan. The polypeptide is Probable 26S proteasome complex subunit dss-1 (dss-1) (Caenorhabditis elegans).